Consider the following 174-residue polypeptide: ATP synthase subunit delta (174 aa).

The protein belongs to the ATPase delta chain family. In terms of assembly, F-type ATPases have 2 components, F(1) - the catalytic core - and F(0) - the membrane proton channel. F(1) has five subunits: alpha(3), beta(3), gamma(1), delta(1), epsilon(1). F(0) has three main subunits: a(1), b(2) and c(10-14). The alpha and beta chains form an alternating ring which encloses part of the gamma chain. F(1) is attached to F(0) by a central stalk formed by the gamma and epsilon chains, while a peripheral stalk is formed by the delta and b chains.

The protein localises to the cell inner membrane. In terms of biological role, f(1)F(0) ATP synthase produces ATP from ADP in the presence of a proton or sodium gradient. F-type ATPases consist of two structural domains, F(1) containing the extramembraneous catalytic core and F(0) containing the membrane proton channel, linked together by a central stalk and a peripheral stalk. During catalysis, ATP synthesis in the catalytic domain of F(1) is coupled via a rotary mechanism of the central stalk subunits to proton translocation. This protein is part of the stalk that links CF(0) to CF(1). It either transmits conformational changes from CF(0) to CF(1) or is implicated in proton conduction. This chain is ATP synthase subunit delta, found in Francisella tularensis subsp. mediasiatica (strain FSC147).